Reading from the N-terminus, the 248-residue chain is Probable phosphatase VCM66_A0854 (248 aa).

His-8, His-10, His-16, His-41, Glu-74, His-102, His-132, Asp-194, and His-196 together coordinate Zn(2+).

Belongs to the PHP family. Zn(2+) is required as a cofactor.

The chain is Probable phosphatase VCM66_A0854 from Vibrio cholerae serotype O1 (strain M66-2).